The following is a 513-amino-acid chain: Ribonuclease Y (513 aa).

The helical transmembrane segment at 6-26 (YIIIAVVIIIICVILGLYIVD) threads the bilayer. The region spanning 203–288 (TVHVVNLPND…EMVEKAKKEV (86 aa)) is the KH domain. An HD domain is found at 329–422 (VLKHSIEVSH…VQAADAISAA (94 aa)).

It belongs to the RNase Y family.

The protein resides in the cell membrane. Endoribonuclease that initiates mRNA decay. The polypeptide is Ribonuclease Y (Clostridium botulinum (strain ATCC 19397 / Type A)).